A 147-amino-acid polypeptide reads, in one-letter code: Large ribosomal subunit protein bL9 (147 aa).

Belongs to the bacterial ribosomal protein bL9 family.

Its function is as follows. Binds to the 23S rRNA. This chain is Large ribosomal subunit protein bL9, found in Campylobacter jejuni subsp. doylei (strain ATCC BAA-1458 / RM4099 / 269.97).